The sequence spans 612 residues: Probable translation initiation factor IF-2 (612 aa).

The tr-type G domain occupies 11–229 (LRQPIVVVLG…VLAGLTQRYL (219 aa)). Residues 20–27 (GHVDHGKT) are G1. Position 20–27 (20–27 (GHVDHGKT)) interacts with GTP. Positions 45–49 (LITQH) are G2. The segment at 84 to 87 (DTPG) is G3. Residues 84–88 (DTPGH) and 138–141 (NKID) contribute to the GTP site. The G4 stretch occupies residues 138-141 (NKID). Positions 207-209 (SAK) are G5.

The protein belongs to the TRAFAC class translation factor GTPase superfamily. Classic translation factor GTPase family. IF-2 subfamily.

Its function is as follows. Function in general translation initiation by promoting the binding of the formylmethionine-tRNA to ribosomes. Seems to function along with eIF-2. The sequence is that of Probable translation initiation factor IF-2 from Hyperthermus butylicus (strain DSM 5456 / JCM 9403 / PLM1-5).